The primary structure comprises 316 residues: Probable cell division protein WhiA (316 aa).

The H-T-H motif DNA-binding region spans 275-309 (TLKELGEMVESGKISKSGINHRLRKLDQIAEQLRN).

It belongs to the WhiA family.

In terms of biological role, involved in cell division and chromosome segregation. The sequence is that of Probable cell division protein WhiA from Bacillus pumilus (strain SAFR-032).